The sequence spans 639 residues: Chaperone protein DnaK (639 aa).

T197 is subject to Phosphothreonine; by autocatalysis. Composition is skewed to basic and acidic residues over residues 514-529 (AEEN…DLVE) and 540-553 (GTEK…EKVD). Disordered regions lie at residues 514–554 (AEEN…KVDP) and 603–639 (DKAE…RKRG). Residues 612–633 (APEEEERGVDEDIVDADFEDLD) show a composition bias toward acidic residues.

Belongs to the heat shock protein 70 family.

Its function is as follows. Acts as a chaperone. In Jannaschia sp. (strain CCS1), this protein is Chaperone protein DnaK.